A 464-amino-acid chain; its full sequence is Argininosuccinate lyase (464 aa).

Belongs to the lyase 1 family. Argininosuccinate lyase subfamily.

The protein localises to the cytoplasm. The enzyme catalyses 2-(N(omega)-L-arginino)succinate = fumarate + L-arginine. It participates in amino-acid biosynthesis; L-arginine biosynthesis; L-arginine from L-ornithine and carbamoyl phosphate: step 3/3. The protein is Argininosuccinate lyase of Pseudomonas savastanoi pv. phaseolicola (strain 1448A / Race 6) (Pseudomonas syringae pv. phaseolicola (strain 1448A / Race 6)).